Here is a 272-residue protein sequence, read N- to C-terminus: 3-methyl-2-oxobutanoate hydroxymethyltransferase (272 aa).

2 residues coordinate Mg(2+): Asp-43 and Asp-82. Residues 43 to 44, Asp-82, and Lys-112 contribute to the 3-methyl-2-oxobutanoate site; that span reads DS. Glu-114 provides a ligand contact to Mg(2+). Glu-179 (proton acceptor) is an active-site residue.

This sequence belongs to the PanB family. In terms of assembly, homodecamer; pentamer of dimers. Mg(2+) serves as cofactor.

The protein resides in the cytoplasm. It catalyses the reaction 3-methyl-2-oxobutanoate + (6R)-5,10-methylene-5,6,7,8-tetrahydrofolate + H2O = 2-dehydropantoate + (6S)-5,6,7,8-tetrahydrofolate. It participates in cofactor biosynthesis; (R)-pantothenate biosynthesis; (R)-pantoate from 3-methyl-2-oxobutanoate: step 1/2. Functionally, catalyzes the reversible reaction in which hydroxymethyl group from 5,10-methylenetetrahydrofolate is transferred onto alpha-ketoisovalerate to form ketopantoate. This Staphylococcus aureus (strain Newman) protein is 3-methyl-2-oxobutanoate hydroxymethyltransferase.